The following is an 86-amino-acid chain: U15-lycotoxin-Ls1g (86 aa).

Residues 1–20 (MNSKIFAVLLLLGLLSCVLS) form the signal peptide. Positions 21–66 (DQYCPKSSITACKKMNIRNDCCKDDDCTGGSWCCATPCGNFCKYPA) constitute a WAP domain. Cystine bridges form between Cys24-Cys54, Cys32-Cys58, Cys41-Cys53, Cys42-Cys80, and Cys47-Cys62.

The protein belongs to the venom protein 11 family. 01 (wap-1) subfamily. Contains 5 disulfide bonds. In terms of tissue distribution, expressed by the venom gland.

The protein localises to the secreted. Has antibacterial activity. This Lycosa singoriensis (Wolf spider) protein is U15-lycotoxin-Ls1g.